Here is a 235-residue protein sequence, read N- to C-terminus: Protein Thf1 (235 aa).

Residues Leu-179–Thr-228 adopt a coiled-coil conformation.

It belongs to the THF1 family.

May be involved in photosynthetic membrane biogenesis. The chain is Protein Thf1 from Rippkaea orientalis (strain PCC 8801 / RF-1) (Cyanothece sp. (strain PCC 8801)).